The sequence spans 394 residues: NAD(P)H-quinone oxidoreductase subunit H (394 aa).

This sequence belongs to the complex I 49 kDa subunit family. As to quaternary structure, NDH-1 can be composed of about 15 different subunits; different subcomplexes with different compositions have been identified which probably have different functions.

It is found in the cellular thylakoid membrane. The enzyme catalyses a plastoquinone + NADH + (n+1) H(+)(in) = a plastoquinol + NAD(+) + n H(+)(out). It catalyses the reaction a plastoquinone + NADPH + (n+1) H(+)(in) = a plastoquinol + NADP(+) + n H(+)(out). In terms of biological role, NDH-1 shuttles electrons from an unknown electron donor, via FMN and iron-sulfur (Fe-S) centers, to quinones in the respiratory and/or the photosynthetic chain. The immediate electron acceptor for the enzyme in this species is believed to be plastoquinone. Couples the redox reaction to proton translocation, and thus conserves the redox energy in a proton gradient. Cyanobacterial NDH-1 also plays a role in inorganic carbon-concentration. This chain is NAD(P)H-quinone oxidoreductase subunit H, found in Prochlorococcus marinus (strain MIT 9211).